The chain runs to 343 residues: Glyceraldehyde-3-phosphate dehydrogenase 1 (343 aa).

NAD(+)-binding positions include 13–14 (RI), aspartate 35, arginine 79, and serine 121. Residues 154–156 (SCT), threonine 185, 214–215 (TG), and arginine 237 contribute to the D-glyceraldehyde 3-phosphate site. Cysteine 155 (nucleophile) is an active-site residue. Asparagine 319 lines the NAD(+) pocket.

The protein belongs to the glyceraldehyde-3-phosphate dehydrogenase family. Homotetramer.

It is found in the cytoplasm. It catalyses the reaction D-glyceraldehyde 3-phosphate + phosphate + NAD(+) = (2R)-3-phospho-glyceroyl phosphate + NADH + H(+). It participates in carbohydrate degradation; glycolysis; pyruvate from D-glyceraldehyde 3-phosphate: step 1/5. Catalyzes the oxidative phosphorylation of glyceraldehyde 3-phosphate (G3P) to 1,3-bisphosphoglycerate (BPG) using the cofactor NAD. The first reaction step involves the formation of a hemiacetal intermediate between G3P and a cysteine residue, and this hemiacetal intermediate is then oxidized to a thioester, with concomitant reduction of NAD to NADH. The reduced NADH is then exchanged with the second NAD, and the thioester is attacked by a nucleophilic inorganic phosphate to produce BPG. The polypeptide is Glyceraldehyde-3-phosphate dehydrogenase 1 (gap1) (Nostoc sp. (strain PCC 7120 / SAG 25.82 / UTEX 2576)).